Reading from the N-terminus, the 82-residue chain is Ubiquinol-cytochrome-c reductase complex assembly factor 3 (82 aa).

At 1-6 (METVRR) the chain is on the mitochondrial matrix side. Residues 7–29 (IVKGTLLLGFCTGIGGDLWVLVA) traverse the membrane as a helical segment. The Mitochondrial intermembrane portion of the chain corresponds to 30–82 (PGQERRLEMRMNYPEANPPMLAEAHKRNEMVLKVIEESAKTNENMARRSPWSS).

The protein belongs to the UQCC3 family. Associates with the ubiquinol-cytochrome c reductase complex (mitochondrial respiratory chain complex III or cytochrome b-c1 complex).

The protein resides in the mitochondrion inner membrane. In terms of biological role, required for the assembly of the ubiquinol-cytochrome c reductase complex (mitochondrial respiratory chain complex III or cytochrome b-c1 complex), mediating cytochrome b recruitment and probably stabilization within the complex. Thereby, plays an important role in ATP production by mitochondria. Cardiolipin-binding protein, it may also control the cardiolipin composition of mitochondria membranes and their morphology. In Xenopus laevis (African clawed frog), this protein is Ubiquinol-cytochrome-c reductase complex assembly factor 3.